We begin with the raw amino-acid sequence, 428 residues long: GTPase Obg (428 aa).

The 158-residue stretch at 1–158 folds into the Obg domain; it reads MFIDTAKIFV…RWVALELKLL (158 aa). Residues 159 to 331 form the OBG-type G domain; sequence ADVGLLGFPN…VIKEAARMLK (173 aa). GTP is bound by residues 165-172, 190-194, 212-215, 282-285, and 312-314; these read GFPNVGKS, FTTLK, DVPG, NKCD, and SAA. Mg(2+)-binding residues include S172 and T192. The 84-residue stretch at 345–428 folds into the OCT domain; that stretch reads RFIPEDKKFT…LNDFEFEYLL (84 aa).

It belongs to the TRAFAC class OBG-HflX-like GTPase superfamily. OBG GTPase family. In terms of assembly, monomer. Mg(2+) is required as a cofactor.

The protein localises to the cytoplasm. Functionally, an essential GTPase which binds GTP, GDP and possibly (p)ppGpp with moderate affinity, with high nucleotide exchange rates and a fairly low GTP hydrolysis rate. Plays a role in control of the cell cycle, stress response, ribosome biogenesis and in those bacteria that undergo differentiation, in morphogenesis control. This is GTPase Obg from Clostridium perfringens (strain ATCC 13124 / DSM 756 / JCM 1290 / NCIMB 6125 / NCTC 8237 / Type A).